The primary structure comprises 344 residues: Protein RecA (344 aa).

65 to 72 (GPESSGKT) serves as a coordination point for ATP.

Belongs to the RecA family.

Its subcellular location is the cytoplasm. Functionally, can catalyze the hydrolysis of ATP in the presence of single-stranded DNA, the ATP-dependent uptake of single-stranded DNA by duplex DNA, and the ATP-dependent hybridization of homologous single-stranded DNAs. It interacts with LexA causing its activation and leading to its autocatalytic cleavage. In Campylobacter lari, this protein is Protein RecA.